Consider the following 305-residue polypeptide: D-alanine--D-alanine ligase (305 aa).

Residues 104 to 300 form the ATP-grasp domain; sequence RALFASAGIP…FPELVRWMVE (197 aa). 131–181 lines the ATP pocket; sequence LPRPFVVKPLNEGSSVGVFIVRDNQPSPLPDWPFDADEVLVESFIPGRELT. Mg(2+) contacts are provided by Asp249, Glu267, and Asn269.

It belongs to the D-alanine--D-alanine ligase family. Requires Mg(2+) as cofactor. Mn(2+) is required as a cofactor.

The protein localises to the cytoplasm. The enzyme catalyses 2 D-alanine + ATP = D-alanyl-D-alanine + ADP + phosphate + H(+). The protein operates within cell wall biogenesis; peptidoglycan biosynthesis. Its function is as follows. Cell wall formation. This Paramagnetospirillum magneticum (strain ATCC 700264 / AMB-1) (Magnetospirillum magneticum) protein is D-alanine--D-alanine ligase.